Reading from the N-terminus, the 363-residue chain is Protein-arginine kinase (363 aa).

A Phosphagen kinase C-terminal domain is found at 24–254 (IVLSSRIRLA…AQLIEQERSA (231 aa)). 27 to 31 (SSRIR) provides a ligand contact to ATP. Phosphoarginine; by autocatalysis occurs at positions 29, 40, and 86. ATP is bound by residues His-92, Arg-125, and 176-180 (RASVM). A Phosphoarginine; by autocatalysis modification is found at Arg-190. 207 to 212 (RGIYGE) is an ATP binding site. 3 positions are modified to phosphoarginine; by autocatalysis: Arg-255, Arg-269, and Arg-272. The RDXXRA motif of the pArg binding pocket involved in allosteric regulation motif lies at 337–342 (RDIRRA). Phosphoarginine; by autocatalysis is present on Arg-346.

The protein belongs to the ATP:guanido phosphotransferase family. In terms of assembly, interacts with CtsR in its autophosphorylated form. Interacts with McsA in nonstressed as well as in heat-stressed cells, whereas strongly interacts with ClpC only in nonstressed cells. Autophosphorylated on Arg residues. Phosphorylation on Arg-40 and Arg-86 are up-regulated upon stress conditions.

The protein localises to the cytoplasm. It carries out the reaction L-arginyl-[protein] + ATP = N(omega)-phospho-L-arginyl-[protein] + ADP + H(+). Appears to be allosterically activated by the binding of pArg-containing polypeptides to the pArg-binding pocket localized in the C-terminal domain of McsB. The McsB kinase is inhibited in nonstressed cells by direct interaction with ClpC; upon heat exposure, the interaction of McsB with ClpC is dramatically decreased, leading to McsB release and activation during heat stress. Its kinase activity is counteracted by the protein-arginine-phosphatase YwlE in vivo. Requires McsA for full kinase activity. Functionally, catalyzes the specific phosphorylation of arginine residues in a large number of proteins. Is part of the bacterial stress response system, where it is involved in regulating the global heat shock repressor CtsR; phosphorylates arginine residues in the winged helix-turn-helix domain of CtsR, thereby preventing its binding to DNA and consequently inducing the expression of repressed genes. The transcriptional repressor HrcA, the chaperone GroEL, the unfoldase ClpC, together with several ribosomal subunits, represent other physiological targets of McsB under stress conditions. Protein arginine phosphorylation has a physiologically important role and is involved in the regulation of many critical cellular processes, such as protein homeostasis, motility, competence, and stringent and stress responses, by regulating gene expression and protein activity. Functions as an adapter whose kinase activity is required for ClpCP-mediated degradation of CtsR during heat stress. Is required for the delocalization of competence proteins from the cell poles, probably via a role in the degradation of anchor proteins. The protein is Protein-arginine kinase of Bacillus subtilis (strain 168).